The chain runs to 230 residues: Ion-translocating oxidoreductase complex subunit E (230 aa).

6 helical membrane passes run 11-31 (GMWA…LLAV), 39-59 (LGLG…VSLV), 69-89 (IPVF…LMNA), 93-113 (GLYL…IIIG), 132-152 (FWMG…REII), and 182-202 (SFLL…LIAL).

The protein belongs to the NqrDE/RnfAE family. In terms of assembly, the complex is composed of six subunits: RnfA, RnfB, RnfC, RnfD, RnfE and RnfG.

Its subcellular location is the cell inner membrane. In terms of biological role, part of a membrane-bound complex that couples electron transfer with translocation of ions across the membrane. This chain is Ion-translocating oxidoreductase complex subunit E, found in Vibrio atlanticus (strain LGP32) (Vibrio splendidus (strain Mel32)).